Reading from the N-terminus, the 250-residue chain is Proteasome subunit alpha type-7-A (250 aa).

Lys62 participates in a covalent cross-link: Glycyl lysine isopeptide (Lys-Gly) (interchain with G-Cter in ubiquitin).

The protein belongs to the peptidase T1A family. As to quaternary structure, component of the 20S core complex of the 26S proteasome. The 26S proteasome is composed of a core protease (CP), known as the 20S proteasome, capped at one or both ends by the 19S regulatory particle (RP/PA700). The 20S proteasome core is composed of 28 subunits that are arranged in four stacked rings, resulting in a barrel-shaped structure. The two end rings are each formed by seven alpha subunits, and the two central rings are each formed by seven beta subunits. The catalytic chamber with the active sites is on the inside of the barrel. Interacts with KIN10 and KIN11 SnRK subunits, and with the SKP1A/ASK1 subunit of the SCF E3 ubiquitin ligase complex. In terms of tissue distribution, expressed in roots, leaves and flowers.

The protein resides in the cytoplasm. Its subcellular location is the nucleus. The proteasome is a multicatalytic proteinase complex which is characterized by its ability to cleave peptides with Arg, Phe, Tyr, Leu, and Glu adjacent to the leaving group at neutral or slightly basic pH. The proteasome has an ATP-dependent proteolytic activity. Mediates the association of the SCF(TIR1) E3 ubiquitin ligase complex with the proteasome. The chain is Proteasome subunit alpha type-7-A (PAD1) from Arabidopsis thaliana (Mouse-ear cress).